A 442-amino-acid chain; its full sequence is MAAARYWKLVPRGRGLSQNAAAKASATAPEVRDLEVVATPVARYPPIVASMTADSKAARQRRVQRWQATVHAAPSVDEKIRILTKMQFKKYVVHPQISALNADRWYQSFTKTVFVSGLPPAPALSPPPPSLDLAALRAAVCDCILQEQVYVRRRRPRSLFDRRQALASSILDQVVRTLVNLLAPLNPVLSTAALDCKRSVDFYWLRGEERIPAGHRKGHIDALRYQINDKPHNQIRISKQLPEFVPLDYSIPTEIPVMKCKPDKLPLFRRQYENSIFTGSKTADPCCYGHTQFHLIPDRLKRERLIRQNQAEQVEAVFRANAIASLFAWTGAQAMYQGFWSEADVTRPFVSQAVITDGKYFSFFCYQLNTLALTVQADQNNPRKNLCWGSQSQPLYETVEDNDVKGFDDGTLLQIVHFLLNKPREDGAQLLASQEKELDLGP.

This sequence belongs to the mitochondrion-specific ribosomal protein mL65 family. As to quaternary structure, component of the mitochondrial ribosome small subunit (28S) which comprises a 12S rRNA and about 30 distinct proteins.

Its subcellular location is the mitochondrion. The chain is Large ribosomal subunit protein mL65 (Mrps30) from Mus musculus (Mouse).